We begin with the raw amino-acid sequence, 326 residues long: Isopenicillin N synthase (326 aa).

Isopenicillin N is bound by residues arginine 84, tyrosine 88, and tyrosine 186. The N-[(5S)-5-amino-5-carboxypentanoyl]-L-cysteinyl-D-valine site is built by arginine 84, tyrosine 88, tyrosine 186, histidine 209, and aspartate 211. Residues 183-283 (LIRYPFLENY…RLSIPFFANL (101 aa)) form the Fe2OG dioxygenase domain. 3 residues coordinate Fe(2+): histidine 209, aspartate 211, and histidine 265. Arginine 274 provides a ligand contact to 2-oxoglutarate. Serine 276 serves as a coordination point for isopenicillin N. Residue serine 276 coordinates N-[(5S)-5-amino-5-carboxypentanoyl]-L-cysteinyl-D-valine.

This sequence belongs to the iron/ascorbate-dependent oxidoreductase family. Fe cation serves as cofactor. L-ascorbate is required as a cofactor.

It carries out the reaction N-[(5S)-5-amino-5-carboxypentanoyl]-L-cysteinyl-D-valine + O2 = isopenicillin N + 2 H2O. Its pathway is antibiotic biosynthesis; penicillin G biosynthesis; penicillin G from L-alpha-aminoadipate and L-cysteine and L-valine: step 2/3. Removes, in the presence of oxygen, 4 hydrogen atoms from delta-L-(alpha-aminoadipyl)-L-cysteinyl-D-valine (ACV) to form the azetidinone and thiazolidine rings of isopenicillin. The chain is Isopenicillin N synthase (pcbC) from Lysobacter lactamgenus.